The following is a 260-amino-acid chain: UPF0246 protein BamMC406_2140 (260 aa).

Belongs to the UPF0246 family.

The sequence is that of UPF0246 protein BamMC406_2140 from Burkholderia ambifaria (strain MC40-6).